The sequence spans 583 residues: MTAQHNIVVIGGGGAGLRAAIAIAETNPHLDVAIVSKVYPMRSHTVSAEGGAAAVTGDDDSLDEHAHDTVSGGDWLCDQDAVEAFVAEAPKELVQLEHWGCPWSRKPDGRVAVRPFGGMKKLRTWFAADKTGFHLLHTLFQRLLTYSDVMRYDEWFATTLLVDDGRVCGLVAIELATGRIETILADAVILCTGGCGRVFPFTTNANIKTGDGMALAFRAGAPLKDMEFVQYHPTGLPFTGILITEAARAEGGWLLNKDGYRYLQDYDLGKPTPEPRLRSMELGPRDRLSQAFVHEHNKGRTVDTPYGPVVYLDLRHLGADLIDAKLPFVRELCRDYQHIDPVVELVPVRPVVHYMMGGVHTDINGATTLPGLYAAGETACVSINGANRLGSNSLPELLVFGARAGRAAADYAARHQKSDRGPSSAVRAQARTEALRLERELSRHGQGGERIADIRADMQATLESAAGIYRDGPTLTKAVEEIRVLQERFATAGIDDHSRTFNTELTALLELSGMLDVALAIVESGLRREESRGAHQRTDFPNRDDEHFLAHTLVHRESDGTLRVGYLPVTITRWPPGERVYGR.

FAD contacts are provided by residues 11-15 (GGGGA), 35-37 (VSK), 43-51 (SHTVSAEGG), 155-157 (WFA), and Asp-211. His-44 is modified (tele-8alpha-FAD histidine). Residues His-232 and Arg-248 contribute to the active site. FAD-binding positions include 353-354 (HY), Glu-377, and 388-394 (RLGSNSL).

It belongs to the FAD-dependent oxidoreductase 2 family. FRD/SDH subfamily. Part of an enzyme complex containing four subunits: a flavoprotein (FrdA), an iron-sulfur protein (FrdB), and two hydrophobic anchor proteins (FrdC and FrdD). FAD is required as a cofactor.

The protein localises to the cell membrane. It catalyses the reaction a quinone + succinate = fumarate + a quinol. It carries out the reaction a menaquinone + succinate = a menaquinol + fumarate. This Mycobacterium tuberculosis (strain CDC 1551 / Oshkosh) protein is Fumarate reductase flavoprotein subunit (frdA).